We begin with the raw amino-acid sequence, 478 residues long: Pyruvate kinase (478 aa).

R35 serves as a coordination point for substrate. The K(+) site is built by N37, S39, and D69. 37–40 (NMSH) lines the ATP pocket. ATP-binding residues include R76 and K157. Residue E219 coordinates Mg(2+). Residues G242, D243, and T275 each coordinate substrate. Mg(2+) is bound at residue D243.

Belongs to the pyruvate kinase family. As to quaternary structure, homotetramer. Mg(2+) is required as a cofactor. The cofactor is K(+).

The enzyme catalyses pyruvate + ATP = phosphoenolpyruvate + ADP + H(+). Its pathway is carbohydrate degradation; glycolysis; pyruvate from D-glyceraldehyde 3-phosphate: step 5/5. This is Pyruvate kinase (pyk) from Methylorubrum extorquens (strain ATCC 14718 / DSM 1338 / JCM 2805 / NCIMB 9133 / AM1) (Methylobacterium extorquens).